A 116-amino-acid chain; its full sequence is Large ribosomal subunit protein bL19 (116 aa).

The protein belongs to the bacterial ribosomal protein bL19 family.

This protein is located at the 30S-50S ribosomal subunit interface and may play a role in the structure and function of the aminoacyl-tRNA binding site. This chain is Large ribosomal subunit protein bL19, found in Azotobacter vinelandii (strain DJ / ATCC BAA-1303).